The chain runs to 509 residues: Lysine--tRNA ligase (509 aa).

The Mg(2+) site is built by E418 and E425.

This sequence belongs to the class-II aminoacyl-tRNA synthetase family. As to quaternary structure, homodimer. Requires Mg(2+) as cofactor.

It is found in the cytoplasm. It carries out the reaction tRNA(Lys) + L-lysine + ATP = L-lysyl-tRNA(Lys) + AMP + diphosphate. This is Lysine--tRNA ligase (lysS) from Acinetobacter baylyi (strain ATCC 33305 / BD413 / ADP1).